The primary structure comprises 360 residues: Sensor histidine kinase LiaS (360 aa).

Over 1–15 (MRKKMLASLQWRAIR) the chain is Cytoplasmic. Residues 16 to 36 (MTTGISLLLFVCLISFMMFYY) traverse the membrane as a helical segment. Over 37–47 (RLDPLVLLSSS) the chain is Extracellular. The chain crosses the membrane as a helical span at residues 48–68 (WFGIPFILILLLISVTVGFAS). Residues 69-360 (GYMYGNRLKT…ENERDSSIID (292 aa)) are Cytoplasmic-facing. In terms of domain architecture, HAMP spans 74 to 126 (NRLKTRIDTLIESILTFENGNFAYRIPPLGDDEIGLAADQLNEMAKRVELQVA). Positions 153-346 (RLARDLHDAV…QIEVKVPIFP (194 aa)) constitute a Histidine kinase domain. Residue histidine 159 is modified to Phosphohistidine; by autocatalysis.

It is found in the cell membrane. The catalysed reaction is ATP + protein L-histidine = ADP + protein N-phospho-L-histidine.. Its function is as follows. Member of the two-component regulatory system LiaS/LiaR probably involved in response to a subset of cell wall-active antibiotics that interfere with the lipid II cycle in the cytoplasmic membrane (bacitracin, nisin, ramoplanin and vancomycin). Also seems to be involved in response to cationic antimicrobial peptides and secretion stress. Activates probably LiaR by phosphorylation. The polypeptide is Sensor histidine kinase LiaS (liaS) (Bacillus subtilis (strain 168)).